We begin with the raw amino-acid sequence, 265 residues long: Ribonuclease 3 (265 aa).

An RNase III domain is found at 34–157; it reads LAVLTRKLGY…LIGAIYLDSQ (124 aa). Residue Glu-70 coordinates Mg(2+). Asp-74 is a catalytic residue. Asp-143 and Glu-146 together coordinate Mg(2+). Residue Glu-146 is part of the active site. The region spanning 185 to 256 is the DRBM domain; sequence DAKSRLQEWL…AELMINQLHK (72 aa).

This sequence belongs to the ribonuclease III family. In terms of assembly, homodimer. Mg(2+) is required as a cofactor.

It localises to the cytoplasm. It carries out the reaction Endonucleolytic cleavage to 5'-phosphomonoester.. Its function is as follows. Digests double-stranded RNA. Involved in the processing of primary rRNA transcript to yield the immediate precursors to the large and small rRNAs (23S and 16S). Processes some mRNAs, and tRNAs when they are encoded in the rRNA operon. Processes pre-crRNA and tracrRNA of type II CRISPR loci if present in the organism. The sequence is that of Ribonuclease 3 from Psychrobacter arcticus (strain DSM 17307 / VKM B-2377 / 273-4).